The following is a 509-amino-acid chain: Light-independent protochlorophyllide reductase subunit B (509 aa).

Asp-36 contributes to the [4Fe-4S] cluster binding site. Asp-295 acts as the Proton donor in catalysis. 430–431 serves as a coordination point for substrate; it reads GM.

Belongs to the ChlB/BchB/BchZ family. In terms of assembly, protochlorophyllide reductase is composed of three subunits; ChlL, ChlN and ChlB. Forms a heterotetramer of two ChlB and two ChlN subunits. [4Fe-4S] cluster is required as a cofactor.

Its subcellular location is the plastid. It localises to the chloroplast. The catalysed reaction is chlorophyllide a + oxidized 2[4Fe-4S]-[ferredoxin] + 2 ADP + 2 phosphate = protochlorophyllide a + reduced 2[4Fe-4S]-[ferredoxin] + 2 ATP + 2 H2O. It participates in porphyrin-containing compound metabolism; chlorophyll biosynthesis (light-independent). Component of the dark-operative protochlorophyllide reductase (DPOR) that uses Mg-ATP and reduced ferredoxin to reduce ring D of protochlorophyllide (Pchlide) to form chlorophyllide a (Chlide). This reaction is light-independent. The NB-protein (ChlN-ChlB) is the catalytic component of the complex. This chain is Light-independent protochlorophyllide reductase subunit B, found in Mesostigma viride (Green alga).